A 296-amino-acid chain; its full sequence is Ribosomal protein L11 methyltransferase (296 aa).

Positions 139, 163, 185, and 232 each coordinate S-adenosyl-L-methionine.

It belongs to the methyltransferase superfamily. PrmA family.

It is found in the cytoplasm. The catalysed reaction is L-lysyl-[protein] + 3 S-adenosyl-L-methionine = N(6),N(6),N(6)-trimethyl-L-lysyl-[protein] + 3 S-adenosyl-L-homocysteine + 3 H(+). Its function is as follows. Methylates ribosomal protein L11. The polypeptide is Ribosomal protein L11 methyltransferase (Rippkaea orientalis (strain PCC 8801 / RF-1) (Cyanothece sp. (strain PCC 8801))).